A 398-amino-acid polypeptide reads, in one-letter code: Argininosuccinate synthase (398 aa).

Residue 9-17 participates in ATP binding; it reads AYSGGLDTS. Residue tyrosine 85 participates in L-citrulline binding. Glycine 115 lines the ATP pocket. Residues threonine 117, asparagine 121, and aspartate 122 each contribute to the L-aspartate site. Position 121 (asparagine 121) interacts with L-citrulline. L-citrulline-binding residues include arginine 125, serine 173, glutamate 258, and tyrosine 270.

Belongs to the argininosuccinate synthase family. Type 1 subfamily. As to quaternary structure, homotetramer.

The protein localises to the cytoplasm. The enzyme catalyses L-citrulline + L-aspartate + ATP = 2-(N(omega)-L-arginino)succinate + AMP + diphosphate + H(+). It participates in amino-acid biosynthesis; L-arginine biosynthesis; L-arginine from L-ornithine and carbamoyl phosphate: step 2/3. The protein is Argininosuccinate synthase of Streptococcus pneumoniae (strain Hungary19A-6).